The sequence spans 244 residues: Phosphoadenosine 5'-phosphosulfate reductase (244 aa).

Cys-239 serves as the catalytic Nucleophile; cysteine thiosulfonate intermediate.

It belongs to the PAPS reductase family. CysH subfamily.

It is found in the cytoplasm. The catalysed reaction is [thioredoxin]-disulfide + sulfite + adenosine 3',5'-bisphosphate + 2 H(+) = [thioredoxin]-dithiol + 3'-phosphoadenylyl sulfate. Its pathway is sulfur metabolism; hydrogen sulfide biosynthesis; sulfite from sulfate: step 3/3. In terms of biological role, catalyzes the formation of sulfite from phosphoadenosine 5'-phosphosulfate (PAPS) using thioredoxin as an electron donor. This chain is Phosphoadenosine 5'-phosphosulfate reductase, found in Pectobacterium carotovorum subsp. carotovorum (strain PC1).